The chain runs to 357 residues: Dynein axonemal assembly factor 10 (357 aa).

WD repeat units lie at residues 80-127, 132-170, 184-223, and 277-321; these read EFTN…IPIW, AHQGSISAIDAYADNLVVCGGKDGTIKVYDTRIKPNSAN, EQTNKSNCWSICTNDNNIIAGFENGDLNIYNLKTNSIQST, and EPNQ…IDKV.

In terms of assembly, interacts with PIH1D1; the interaction associates DNAAF10 with the R2TP complex. Interacts with several dynein axonemal assembly factors.

It is found in the dynein axonemal particle. Functionally, key assembly factor specifically required for the stability of axonemal dynein heavy chains in cytoplasm. The polypeptide is Dynein axonemal assembly factor 10 (dnaaf10) (Dictyostelium discoideum (Social amoeba)).